Consider the following 118-residue polypeptide: UPF0342 protein ABC1519 (118 aa).

The protein belongs to the UPF0342 family.

The chain is UPF0342 protein ABC1519 from Shouchella clausii (strain KSM-K16) (Alkalihalobacillus clausii).